The primary structure comprises 500 residues: 4-aminobutyrate aminotransferase, mitochondrial (500 aa).

The transit peptide at 1–27 directs the protein to the mitochondrion; it reads MAFLLTTRRLVCSSQKNLHLFTPGSRY. A [2Fe-2S] cluster-binding site is contributed by Cys163. Position 164-165 (164-165) interacts with pyridoxal 5'-phosphate; the sequence is GS. Residue Cys166 participates in [2Fe-2S] cluster binding. Substrate is bound at residue Arg220. Residue Lys231 is modified to N6-succinyllysine. An N6-acetyllysine; alternate modification is found at Lys252. N6-succinyllysine; alternate is present on Lys252. 2 positions are modified to N6-acetyllysine: Lys279 and Lys318. Lys357 is modified (N6-(pyridoxal phosphate)lysine). Thr381 contacts pyridoxal 5'-phosphate. The residue at position 413 (Lys413) is an N6-acetyllysine; alternate. Lys413 carries the post-translational modification N6-succinyllysine; alternate. Residues Lys452 and Lys470 each carry the N6-acetyllysine modification.

This sequence belongs to the class-III pyridoxal-phosphate-dependent aminotransferase family. Homodimer; disulfide-linked. It depends on pyridoxal 5'-phosphate as a cofactor. [2Fe-2S] cluster is required as a cofactor.

Its subcellular location is the mitochondrion matrix. The catalysed reaction is 4-aminobutanoate + 2-oxoglutarate = succinate semialdehyde + L-glutamate. The enzyme catalyses (S)-3-amino-2-methylpropanoate + 2-oxoglutarate = 2-methyl-3-oxopropanoate + L-glutamate. Its function is as follows. Catalyzes the conversion of gamma-aminobutyrate and L-beta-aminoisobutyrate to succinate semialdehyde and methylmalonate semialdehyde, respectively. Can also convert delta-aminovalerate and beta-alanine. The polypeptide is 4-aminobutyrate aminotransferase, mitochondrial (Rattus norvegicus (Rat)).